The following is a 458-amino-acid chain: Phosphoglucosamine mutase (458 aa).

Residue serine 106 is the Phosphoserine intermediate of the active site. Mg(2+) contacts are provided by serine 106, aspartate 247, aspartate 249, and aspartate 251. Serine 106 is subject to Phosphoserine.

It belongs to the phosphohexose mutase family. It depends on Mg(2+) as a cofactor. Post-translationally, activated by phosphorylation.

It catalyses the reaction alpha-D-glucosamine 1-phosphate = D-glucosamine 6-phosphate. Catalyzes the conversion of glucosamine-6-phosphate to glucosamine-1-phosphate. In Chlamydia trachomatis serovar A (strain ATCC VR-571B / DSM 19440 / HAR-13), this protein is Phosphoglucosamine mutase.